Consider the following 497-residue polypeptide: Vacuolar-processing enzyme (497 aa).

The N-terminal stretch at 1 to 31 (METHKSLLFFTNYVLFLVFTLSFLPIPGLLA) is a signal peptide. The active site involves His-180. Cys-222 serves as the catalytic Nucleophile. A disulfide bridge connects residues Cys-255 and Cys-269. Asn-320 and Asn-374 each carry an N-linked (GlcNAc...) asparagine glycan. 2 disulfides stabilise this stretch: Cys-433-Cys-463 and Cys-445-Cys-480.

This sequence belongs to the peptidase C13 family.

Functionally, asparagine-specific endopeptidase involved in the processing of vacuolar seed protein precursors into the mature forms. In Ricinus communis (Castor bean), this protein is Vacuolar-processing enzyme.